The chain runs to 1234 residues: MAGAQPGVHALQLEPPTVVETLRRGSKFIKWDEETSSRNLVTLRVDPNGFFLYWTGPNMEVDTLDISSIRDTRTGRYARLPKDPKIREVLGFGGPDARLEEKLMTVVSGPDPVNTVFLNFMAVQDDTAKVWSEELFKLAMNILAQNASRNTFLRKAYTKLKLQVNQDGRIPVKNILKMFSADKKRVETALESCGLKFNRSESIRPDEFSLEIFERFLNKLCLRPDIDKILLEIGAKGKPYLTLEQLMDFINQKQRDPRLNEVLYPPLRPSQARLLIEKYEPNQQFLERDQMSMEGFSRYLGGEENGILPLEALDLSTDMTQPLSAYFINSSHNTYLTAGQLAGTSSVEMYRQALLWGCRCVELDVWKGRPPEEEPFITHGFTMTTEVPLRDVLEAIAETAFKTSPYPVILSFENHVDSAKQQAKMAEYCRSIFGDALLIEPLDKYPLAPGVPLPSPQDLMGRILVKNKKRHRPSAGGPDSAGRKRPLEQSNSALSESSAATEPSSPQLGSPSSDSCPGLSNGEEVGLEKPSLEPQKSLGDEGLNRGPYVLGPADREDEEEDEEEEEQTDPKKPTTDEGTASSEVNATEEMSTLVNYIEPVKFKSFEAARKRNKCFEMSSFVETKAMEQLTKSPMEFVEYNKQQLSRIYPKGTRVDSSNYMPQLFWNVGCQLVALNFQTLDVAMQLNAGVFEYNGRSGYLLKPEFMRRPDKSFDPFTEVIVDGIVANALRVKVISGQFLSDRKVGIYVEVDMFGLPVDTRRKYRTRTSQGNSFNPVWDEEPFDFPKVVLPTLASLRIAAFEEGGKFVGHRILPVSAIRSGYHYVCLRNEANQPLCLPALLIYTEASDYIPDDHQDYAEALINPIKHVSLMDQRARQLAALIGESEAQAGQETCQDTQSQQLGSQPSSNPTPSPLDASPRRPPGPTTSPASTSLSSPGQRDDLIASILSEVAPTPLDELRGHKALVKLRSRQERDLRELRKKHQRKAVTLTRRLLDGLAQAQAEGRCRLRPGALGGAADVEDTKEGEDEAKRYQEFQNRQVQSLLELREAQVDAEAQRRLEHLRQALQRLREVVLDANTTQFKRLKEMNEREKKELQKILDRKRHNSISEAKMRDKHKKEAELTEINRRHITESVNSIRRLEEAQKQRHDRLVAGQQQVLQQLAEEEPKLLAQLAQECQEQRARLPQEIRRSLLGEMPEGLGDGPLVACASNGHAPGSSGHLSGADSESQEENTQL.

The residue at position 2 (Ala-2) is an N-acetylalanine. The 151-residue stretch at 318–468 (DMTQPLSAYF…LMGRILVKNK (151 aa)) folds into the PI-PLC X-box domain. Residues His-332 and His-379 contribute to the active site. The interval 467 to 587 (NKKRHRPSAG…GTASSEVNAT (121 aa)) is disordered. Phosphoserine is present on residues Ser-474, Ser-490, Ser-495, and Ser-537. The span at 488-515 (EQSNSALSESSAATEPSSPQLGSPSSDS) shows a compositional bias: low complexity. Residues 555–567 (REDEEEDEEEEEQ) show a composition bias toward acidic residues. Residues 576 to 587 (DEGTASSEVNAT) show a composition bias toward polar residues. One can recognise a PI-PLC Y-box domain in the interval 590–706 (MSTLVNYIEP…GYLLKPEFMR (117 aa)). The 129-residue stretch at 707 to 835 (RPDKSFDPFT…RNEANQPLCL (129 aa)) folds into the C2 domain. Over residues 887–908 (AGQETCQDTQSQQLGSQPSSNP) the composition is skewed to polar residues. The segment at 887 to 937 (AGQETCQDTQSQQLGSQPSSNPTPSPLDASPRRPPGPTTSPASTSLSSPGQ) is disordered. The segment covering 925–936 (TSPASTSLSSPG) has biased composition (low complexity). A phosphoserine mark is found at Ser-926 and Ser-1105. Positions 1198–1234 (GLGDGPLVACASNGHAPGSSGHLSGADSESQEENTQL) are disordered. Residues 1231-1234 (NTQL) are interaction with SHANK2.

Interacts with SHANK2. Interacts with LPAR2. Ca(2+) is required as a cofactor.

The protein resides in the cytoplasm. It is found in the membrane. It localises to the nucleus. It catalyses the reaction a 1,2-diacyl-sn-glycero-3-phospho-(1D-myo-inositol-4,5-bisphosphate) + H2O = 1D-myo-inositol 1,4,5-trisphosphate + a 1,2-diacyl-sn-glycerol + H(+). The enzyme catalyses a 1,2-diacyl-sn-glycero-3-phospho-(1D-myo-inositol) + H2O = 1D-myo-inositol 1-phosphate + a 1,2-diacyl-sn-glycerol + H(+). Activated by G(q)/G(11) G alpha proteins in response to ligand-binding to G protein-coupled receptors. Catalyzes the production of the second messenger molecules diacylglycerol (DAG) and inositol 1,4,5-trisphosphate (IP3). Key transducer of G protein-coupled receptor signaling: activated by G(q)/G(11) G alpha proteins downstream of G protein-coupled receptors activation. In neutrophils, participates in a phospholipase C-activating N-formyl peptide-activated GPCR (G protein-coupled receptor) signaling pathway by promoting RASGRP4 activation by DAG, to promote neutrophil functional responses. This Homo sapiens (Human) protein is 1-phosphatidylinositol 4,5-bisphosphate phosphodiesterase beta-3.